Reading from the N-terminus, the 633-residue chain is MESGPKMLAPICLVENNNEQLLVNQQAIQILEKISQPVVVVAIVGLYRTGKSYLMNHLAGQNHGFPLGSTVQSETKGIWMWCVPHPSKPNHTLVLLDTEGLGDVEKGDPKNDSWIFALAVLLCSTFIYNSMSTINHQALEQLHYVTELTELIKAKSSPRPDGVDDSTEFVSFFPDFIWTVRDFTLELKLNGHPITEDEYLENALKLIQGNNPRVQTSNLPRECIRRFFPKRKCFIFDRPTNDKDLLANIEKVSEKQLDPKFQEQTNIFSSYIFTHARTKTLREGIIVTGNRLGTLAVTYVEAVNSGAVPCLENAVITLAQRENSAAVQRAADYYSQQMAQRVKFPTDTLQELLDMHAACEREAIAIFMEHSFKDENQEFQKKFMETTMNKKGDFLLQNEESSVQYCQAKLNELSKGLMESISAGSFSVPGGHKLYMETKERIEQDYWQVPRKGVKAKEVFQRFLESQVVIEESILQSDKALTDREKAVAVDRAKKEAAEKEQELLKQKLQEQQQQMEAQDKSLKENIAQLKQKLQMEREQLLREQIMMLEHTQKVQNDWLHEGFKKKYEEMNAEISQFKRMIDITKNDDTPWIARTLDKLADELTAVLSAPAKLIGHGVKGVSSLFKKHKLPF.

Residues 1-310 (MESGPKMLAP…EAVNSGAVPC (310 aa)) form a GTPase domain (Globular) region. A GB1/RHD3-type G domain is found at 35–277 (SQPVVVVAIV…FSSYIFTHAR (243 aa)). GTP-binding positions include 45-52 (GLYRTGKS), 67-69 (LGS), and 97-101 (DTEGL).

Belongs to the TRAFAC class dynamin-like GTPase superfamily. GB1/RHD3 GTPase family. GB1 subfamily.

Its subcellular location is the cytoplasmic vesicle. It catalyses the reaction GTP + H2O = GDP + phosphate + H(+). Functionally, interferon (IFN)-inducible GTPase that plays important roles in innate immunity against a diverse range of bacterial, viral and protozoan pathogens, such as bacterial pathogens Listeria monocytogenes and Mycobacterium bovis BCG as well as the protozoan pathogen Toxoplasma gondii. Confers protection to several pathogens, including the bacterial pathogens Listeria monocytogenes and Mycobacterium bovis BCG as well as the protozoan pathogen Toxoplasma gondii. The polypeptide is Guanylate-binding protein 6 (GBP6) (Pongo abelii (Sumatran orangutan)).